Reading from the N-terminus, the 375-residue chain is MTLQHTPLNAIHRSLGARMVDFGGWDMPVNYGSQIEEHHAVRRDAGIFDVSHMCVVDLTGARVRDFLRGLLANNIDKLQTPGKALYTCMLNPKGGVIDDLIVYFFREDWFRLVVNAGTAPTDIEWITAQNAAAGTGVAITPRRSDNNAGAEPLGIVAVQGPNARAKAYAALPGTQAVGEALKPFNAGFATIDGVGEIMVARTGYTGEDGFELVVPAAQIAGVWERLLQAGVRPCGLGARDTLRLEAGMNLYGQDMDEHVSPLDAGLAWTVDLQSERDFNGKAALAANGQRDQFVGLLLRDKGGVLRAHQKVITAAGDGEITSGTFSPSLSQSIALARLPKDVAIGADVQVEIRDRRLTATVVKLPFVRNGKALVS.

This sequence belongs to the GcvT family. In terms of assembly, the glycine cleavage system is composed of four proteins: P, T, L and H.

It catalyses the reaction N(6)-[(R)-S(8)-aminomethyldihydrolipoyl]-L-lysyl-[protein] + (6S)-5,6,7,8-tetrahydrofolate = N(6)-[(R)-dihydrolipoyl]-L-lysyl-[protein] + (6R)-5,10-methylene-5,6,7,8-tetrahydrofolate + NH4(+). Its function is as follows. The glycine cleavage system catalyzes the degradation of glycine. The protein is Aminomethyltransferase of Ralstonia nicotianae (strain ATCC BAA-1114 / GMI1000) (Ralstonia solanacearum).